Reading from the N-terminus, the 91-residue chain is Insertion element IS1 7 protein InsA (91 aa).

It belongs to the IS1 elements InsA family.

In terms of biological role, absolutely required for transposition of IS1. The polypeptide is Insertion element IS1 7 protein InsA (insA7) (Escherichia coli (strain K12)).